Here is a 258-residue protein sequence, read N- to C-terminus: Small ribosomal subunit protein uS3 (258 aa).

The KH type-2 domain maps to 16–85; sequence IDEYLEKELE…NPQVEVKEVD (70 aa). Residues 198-258 are disordered; sequence RVTETPAEEA…KDADGEESEK (61 aa). The span at 203 to 245 shows a compositional bias: acidic residues; the sequence is PAEEASEASEVVEDLEEVEDLEEIEDLEEVEDLEEVEDLEDTE.

The protein belongs to the universal ribosomal protein uS3 family. Part of the 30S ribosomal subunit.

In terms of biological role, binds the lower part of the 30S subunit head. The protein is Small ribosomal subunit protein uS3 of Methanothermobacter thermautotrophicus (strain ATCC 29096 / DSM 1053 / JCM 10044 / NBRC 100330 / Delta H) (Methanobacterium thermoautotrophicum).